The primary structure comprises 444 residues: Na(+)-translocating NADH-quinone reductase subunit A (444 aa).

This sequence belongs to the NqrA family. Composed of six subunits; NqrA, NqrB, NqrC, NqrD, NqrE and NqrF.

It carries out the reaction a ubiquinone + n Na(+)(in) + NADH + H(+) = a ubiquinol + n Na(+)(out) + NAD(+). NQR complex catalyzes the reduction of ubiquinone-1 to ubiquinol by two successive reactions, coupled with the transport of Na(+) ions from the cytoplasm to the periplasm. NqrA to NqrE are probably involved in the second step, the conversion of ubisemiquinone to ubiquinol. This is Na(+)-translocating NADH-quinone reductase subunit A from Shewanella frigidimarina (strain NCIMB 400).